The sequence spans 410 residues: G-protein coupled receptor family C group 5 member B (410 aa).

The signal sequence occupies residues 1–28 (MFLVLERKMRTHQVFPLPLLLVIASVAS). The Extracellular portion of the chain corresponds to 29–56 (ENASTSRGCGLDLLPQYVSLCDLDAIWG). N-linked (GlcNAc...) asparagine glycosylation is present at N30. The chain crosses the membrane as a helical span at residues 57–77 (IVVEAVAGAGALITLLLMLIL). At 78–94 (LVRLPFIKDKERKRPVC) the chain is on the cytoplasmic side. Residues 95–115 (LHFLFLLGTLGLFGLTFAFII) form a helical membrane-spanning segment. At 116–126 (QMDETICSIRR) the chain is on the extracellular side. The helical transmembrane segment at 127–147 (FLWGVLFALCFSCLLSQAWRV) threads the bilayer. Topologically, residues 148-164 (RRLVRQGTSPASWQLVS) are cytoplasmic. Residues 165 to 185 (LALCLMLVQVIIATEWLVLTV) traverse the membrane as a helical segment. Topologically, residues 186-199 (LRDTKPACAYEPMD) are extracellular. The helical transmembrane segment at 200–220 (FVMALIYDMVLLAITLAQSLF) threads the bilayer. The Cytoplasmic portion of the chain corresponds to 221 to 234 (TLCGKFKRWKVNGA). Residues 235–255 (FILVTTFLSALIWVVWMTMYL) traverse the membrane as a helical segment. The Extracellular portion of the chain corresponds to 256–271 (FGNSLIKQGDAWSDPT). The chain crosses the membrane as a helical span at residues 272-292 (LAITLAASGWVFVIFHAIPEI). The Cytoplasmic segment spans residues 293–410 (HYTLLPPLQE…PPSHTGRHHW (118 aa)). S355 bears the Phosphoserine mark. Residues 356–381 (LEQRSSSLGKKPSSLGNRPSAPFRSN) form a disordered region. Low complexity predominate over residues 360 to 371 (SSSLGKKPSSLG).

It belongs to the G-protein coupled receptor 3 family.

The protein localises to the cell membrane. The protein resides in the cytoplasmic vesicle membrane. Functionally, G-protein coupled receptor involved in the regulation of cell volume. The polypeptide is G-protein coupled receptor family C group 5 member B (Gprc5b) (Mus musculus (Mouse)).